The primary structure comprises 410 residues: MSENIYDVLLERGFIEQATHEAETKELLGKEKVTFYIGFDATADSLTAGHFLTVMAMMHMQRAGHRPIALLGGGTTMIGDPTGKSDMRSMMTRETIDHNAQCFQEQLSKFIDFSDDKAIIANNADWLLNLNYVEFLREIGVHFSVNKMLTAECYKQRMEKGLTFFEFNYMLMQSYDFWVLYKKYGCKLQLGGNDQWSNILGGVDLIRRKEQAPAFGLTFKLLTTSEGLKMGKTMKGAVWLNPEKTSPYEFYQYWRNIEDVKVEECLGLLTFLPMDEVRRLGALEGAEINHAKEVLAYEITKIVHGEEEAKKAQEAAKSLFAGGVTSEHMPTTTYSSAAFEEGIDLITMMIDAKLATSRSDARRNIEQGGVSVNDVKVTDFARKFKSNDFNDDGALLVKKGKKAYHLFRAE.

Residue Tyr-36 coordinates L-tyrosine. Residues 41 to 50 (ATADSLTAGH) carry the 'HIGH' region motif. Residues Tyr-169 and Gln-173 each coordinate L-tyrosine. A 'KMSKS' region motif is present at residues 229–233 (KMGKT). Residue Lys-232 coordinates ATP. The region spanning 343 to 409 (IDLITMMIDA…GKKAYHLFRA (67 aa)) is the S4 RNA-binding domain.

Belongs to the class-I aminoacyl-tRNA synthetase family. TyrS type 1 subfamily. Homodimer.

It is found in the cytoplasm. The enzyme catalyses tRNA(Tyr) + L-tyrosine + ATP = L-tyrosyl-tRNA(Tyr) + AMP + diphosphate + H(+). In terms of biological role, catalyzes the attachment of tyrosine to tRNA(Tyr) in a two-step reaction: tyrosine is first activated by ATP to form Tyr-AMP and then transferred to the acceptor end of tRNA(Tyr). This chain is Tyrosine--tRNA ligase, found in Lachnoclostridium phytofermentans (strain ATCC 700394 / DSM 18823 / ISDg) (Clostridium phytofermentans).